The chain runs to 385 residues: MNRRRKLLIPLLFCGAMLTACDDKSAENAAAMTPEVGVVTLSPGSVNVLSELPGRTVPYEVAEIRPQVGGIIIKRNFIEGDKVNQGDSLYQIDPAPLQAELNSAKGSLAKALSTASNARITFNRQASLLKTNYVSRQDYDTARTQLNEAEANVTVAKAAVEQATINLQYANVTSPITGVSGKSSVTVGALVTANQADSLVTVQRLDPIYVDLTQSVQDFLRMKEEVASGQIKQVQGSTPVQLNLENGKRYGQTGTLKFSDPTVDETTGSVTLRAIFPNPNGDLLPGMYVTALVDEGSRQNVLLVPQEGVTHNAQGKATALILDKDDVVQLREIEASKAIGDQWVVTSGLQAGDRVIVSGLQRIRPGIKARAISSSQENASTESKQ.

The signal sequence occupies residues 1-20; it reads MNRRRKLLIPLLFCGAMLTA. Cys-21 carries the N-palmitoyl cysteine lipid modification. Cys-21 carries the S-diacylglycerol cysteine lipid modification.

This sequence belongs to the membrane fusion protein (MFP) (TC 8.A.1) family. In terms of assembly, homotrimer. Part of the tripartite efflux system MdtEF-TolC, which is composed of an inner membrane transporter, MdtF, a membrane fusion protein, MdtE, and an outer membrane component, TolC. The complex forms a large protein conduit and can translocate molecules across both the inner and outer membranes.

It localises to the cell inner membrane. Part of the tripartite efflux system MdtEF-TolC, which confers resistance to various compounds. The polypeptide is Multidrug resistance protein MdtE (mdtE) (Escherichia coli O6:H1 (strain CFT073 / ATCC 700928 / UPEC)).